The following is a 579-amino-acid chain: Arginine--tRNA ligase (579 aa).

The 'HIGH' region motif lies at 127–137; it reads PNLAKEMHVGH.

This sequence belongs to the class-I aminoacyl-tRNA synthetase family. As to quaternary structure, monomer.

It is found in the cytoplasm. It carries out the reaction tRNA(Arg) + L-arginine + ATP = L-arginyl-tRNA(Arg) + AMP + diphosphate. The protein is Arginine--tRNA ligase of Ectopseudomonas mendocina (strain ymp) (Pseudomonas mendocina).